Reading from the N-terminus, the 165-residue chain is Nucleotide-binding protein PMT9312_0481 (165 aa).

This sequence belongs to the YajQ family.

Functionally, nucleotide-binding protein. In Prochlorococcus marinus (strain MIT 9312), this protein is Nucleotide-binding protein PMT9312_0481.